The chain runs to 108 residues: Nucleoid-associated protein CHAB381_0200 (108 aa).

This sequence belongs to the YbaB/EbfC family. As to quaternary structure, homodimer.

The protein resides in the cytoplasm. The protein localises to the nucleoid. Binds to DNA and alters its conformation. May be involved in regulation of gene expression, nucleoid organization and DNA protection. The polypeptide is Nucleoid-associated protein CHAB381_0200 (Campylobacter hominis (strain ATCC BAA-381 / DSM 21671 / CCUG 45161 / LMG 19568 / NCTC 13146 / CH001A)).